The primary structure comprises 577 residues: Arginine--tRNA ligase (577 aa).

Residues 122–132 carry the 'HIGH' region motif; that stretch reads PNVAKEMHVGH.

Belongs to the class-I aminoacyl-tRNA synthetase family. Monomer.

Its subcellular location is the cytoplasm. It carries out the reaction tRNA(Arg) + L-arginine + ATP = L-arginyl-tRNA(Arg) + AMP + diphosphate. The polypeptide is Arginine--tRNA ligase (Salmonella dublin (strain CT_02021853)).